A 253-amino-acid polypeptide reads, in one-letter code: Putative enoyl-CoA hydratase (253 aa).

Glutamate 131 is a catalytic residue.

This sequence belongs to the enoyl-CoA hydratase/isomerase family. As to quaternary structure, homohexamer; dimer of trimers.

The catalysed reaction is a (3S)-3-hydroxyacyl-CoA = a (2E)-enoyl-CoA + H2O. The chain is Putative enoyl-CoA hydratase from Thermus thermophilus (strain ATCC 27634 / DSM 579 / HB8).